The following is a 92-amino-acid chain: Acyl carrier protein (92 aa).

The Carrier domain occupies 1-84; the sequence is MPSTADERQL…QIAAHLAEAV (84 aa). S44 carries the post-translational modification O-(pantetheine 4'-phosphoryl)serine.

The protein belongs to the acyl carrier protein (ACP) family. Post-translationally, 4'-phosphopantetheine is transferred from CoA to a specific serine of apo-ACP by AcpS. This modification is essential for activity because fatty acids are bound in thioester linkage to the sulfhydryl of the prosthetic group.

The protein resides in the cytoplasm. The protein operates within lipid metabolism; fatty acid biosynthesis. In terms of biological role, carrier of the growing fatty acid chain in fatty acid biosynthesis. This chain is Acyl carrier protein, found in Streptomyces coelicolor (strain ATCC BAA-471 / A3(2) / M145).